Consider the following 479-residue polypeptide: RAC-gamma serine/threonine-protein kinase (479 aa).

Residue Ser2 is modified to N-acetylserine. One can recognise a PH domain in the interval 5-107 (TIVKEGWVQK…WTEAIQAVAD (103 aa)). The cysteines at positions 59 and 76 are disulfide-linked. Residues 148–405 (FDYLKLLGKG…AKEIMRHSFF (258 aa)) form the Protein kinase domain. Residues 154 to 162 (LGKGTFGKV) and Lys177 each bind ATP. Residue Asp271 is the Proton acceptor of the active site. The cysteines at positions 293 and 307 are disulfide-linked. Thr302 carries O-linked (GlcNAc) threonine glycosylation. Position 305 is a phosphothreonine; by PDPK1 (Thr305). An O-linked (GlcNAc) threonine glycan is attached at Thr309. In terms of domain architecture, AGC-kinase C-terminal spans 406–479 (SGVNWQDVYD…QFSYSASGRE (74 aa)). The segment at 445–479 (TITPPEKYDDDGMDGMDNERRPHFPQFSYSASGRE) is disordered. Position 447 is a phosphothreonine (Thr447). The residue at position 472 (Ser472) is a Phosphoserine; by PKC/PRKCZ. An O-linked (GlcNAc) serine; alternate glycan is attached at Ser472.

The protein belongs to the protein kinase superfamily. AGC Ser/Thr protein kinase family. RAC subfamily. In terms of assembly, interacts (via PH domain) with TCL1A; this enhances AKT3 phosphorylation and activation. Interacts with TRAF6. Interacts with KCTD20. Interacts with BTBD10. Phosphorylation on Thr-305 and Ser-472 is required for full activity. Phosphorylation of the activation loop at Thr-305 by PDPK1/PDK1 is a prerequisite for full activation. Phosphorylation at Ser-472 by mTORC2 in response to growth factors plays a key role in AKT1 activation by facilitating subsequent phosphorylation of the activation loop by PDPK1/PDK1. Post-translationally, ubiquitinated. When fully phosphorylated and translocated into the nucleus, undergoes 'Lys-48'-polyubiquitination catalyzed by TTC3, leading to its degradation by the proteasome. In terms of processing, O-GlcNAcylation at Thr-302 and Thr-309 inhibits activating phosphorylation at Thr-305 via disrupting the interaction between AKT and PDPK1/PDK1. Isoform 1 is expressed in prostate, testis, uterus and mammary gland and isoform 2 is expressed in prostate, testis and mammary gland.

It localises to the nucleus. Its subcellular location is the cytoplasm. The protein localises to the membrane. It carries out the reaction L-seryl-[protein] + ATP = O-phospho-L-seryl-[protein] + ADP + H(+). It catalyses the reaction L-threonyl-[protein] + ATP = O-phospho-L-threonyl-[protein] + ADP + H(+). With respect to regulation, two specific sites, one in the kinase domain (Thr-305) and the other in the C-terminal regulatory region (Ser-472), need to be phosphorylated for its full activation. IGF-1 leads to the activation of AKT3, which may play a role in regulating cell survival. In terms of biological role, AKT3 is one of 3 closely related serine/threonine-protein kinases (AKT1, AKT2 and AKT3) called the AKT kinase, and which regulate many processes including metabolism, proliferation, cell survival, growth and angiogenesis. This is mediated through serine and/or threonine phosphorylation of a range of downstream substrates. Over 100 substrate candidates have been reported so far, but for most of them, no isoform specificity has been reported. AKT3 is the least studied AKT isoform. It plays an important role in brain development and is crucial for the viability of malignant glioma cells. AKT3 isoform may also be the key molecule in up-regulation and down-regulation of MMP13 via IL13. Required for the coordination of mitochondrial biogenesis with growth factor-induced increases in cellular energy demands. Down-regulation by RNA interference reduces the expression of the phosphorylated form of BAD, resulting in the induction of caspase-dependent apoptosis. The polypeptide is RAC-gamma serine/threonine-protein kinase (Akt3) (Mus musculus (Mouse)).